Consider the following 1073-residue polypeptide: uncharacterized protein (1073 aa).

The signal sequence occupies residues 1 to 36 (MAEIIHHSNVFTWAFHVSEYDGAPLLLLGSFSSVAS). Asn132 is a glycosylation site (N-linked (GlcNAc...) asparagine). 392 to 399 (ATAGIGKS) is an ATP binding site. Asn544, Asn632, Asn703, Asn732, and Asn953 each carry an N-linked (GlcNAc...) asparagine glycan.

This is an uncharacterized protein from Schizosaccharomyces pombe (strain 972 / ATCC 24843) (Fission yeast).